Consider the following 330-residue polypeptide: Molybdate/tungstate import ATP-binding protein WtpC (330 aa).

One can recognise an ABC transporter domain in the interval 3 to 232 (LMVEGISKDY…PASEEVAKFL (230 aa)). 34 to 41 (GPSGAGKT) lines the ATP pocket.

The protein belongs to the ABC transporter superfamily. Sulfate/tungstate importer (TC 3.A.1.6) family. The complex is composed of two ATP-binding proteins (WtpC), two transmembrane proteins (WtpB) and a solute-binding protein (WtpA).

Its subcellular location is the cell membrane. The catalysed reaction is tungstate(in) + ATP + H2O = tungstate(out) + ADP + phosphate + H(+). Part of the ABC transporter complex WtpABC involved in molybdate/tungstate import. Responsible for energy coupling to the transport system. The sequence is that of Molybdate/tungstate import ATP-binding protein WtpC (wtpC) from Thermococcus kodakarensis (strain ATCC BAA-918 / JCM 12380 / KOD1) (Pyrococcus kodakaraensis (strain KOD1)).